Here is a 62-residue protein sequence, read N- to C-terminus: Photosystem II reaction center protein Z (62 aa).

2 helical membrane passes run 8–28 and 41–61; these read ALAA…VAYA and FVGS…NFFV.

It belongs to the PsbZ family. PSII is composed of 1 copy each of membrane proteins PsbA, PsbB, PsbC, PsbD, PsbE, PsbF, PsbH, PsbI, PsbJ, PsbK, PsbL, PsbM, PsbT, PsbX, PsbY, PsbZ, Psb30/Ycf12, peripheral proteins PsbO, CyanoQ (PsbQ), PsbU, PsbV and a large number of cofactors. It forms dimeric complexes.

The protein resides in the cellular thylakoid membrane. Its function is as follows. May control the interaction of photosystem II (PSII) cores with the light-harvesting antenna, regulates electron flow through the 2 photosystem reaction centers. PSII is a light-driven water plastoquinone oxidoreductase, using light energy to abstract electrons from H(2)O, generating a proton gradient subsequently used for ATP formation. This Picosynechococcus sp. (strain ATCC 27264 / PCC 7002 / PR-6) (Agmenellum quadruplicatum) protein is Photosystem II reaction center protein Z.